Here is a 311-residue protein sequence, read N- to C-terminus: Homeobox protein Hox-B1a (311 aa).

The segment at residues 217–276 is a DNA-binding region (homeobox); that stretch reads QNTIRTNFTTKQLTELEKEFHFSKYLTRARRVEIAATLELNETQVKIWFQNRRMKQKKRE. The interval 267–311 is disordered; it reads NRRMKQKKREKEGLAPASSTSSKDLEDQSDHSTSTSPEASPSPDS. The span at 298 to 311 shows a compositional bias: low complexity; the sequence is STSTSPEASPSPDS.

The protein belongs to the Antp homeobox family. Labial subfamily.

The protein resides in the nucleus. In terms of biological role, sequence-specific transcription factor which is part of a developmental regulatory system that provides cells with specific positional identities on the anterior-posterior axis. The polypeptide is Homeobox protein Hox-B1a (hoxb1a) (Danio rerio (Zebrafish)).